The following is a 907-amino-acid chain: Translation initiation factor IF-2 (907 aa).

The tract at residues 26 to 317 (DAGMKKSSSD…KPKSMQHGFD (292 aa)) is disordered. Composition is skewed to basic and acidic residues over residues 28-44 (GMKKSSSDQVSDEEKQK) and 101-248 (SAIE…DTDY). Residues 299-308 (KGGRKGKLSK) are compositionally biased toward basic residues. The 170-residue stretch at 406–575 (PRAPVVTIMG…LLQAEVLELT (170 aa)) folds into the tr-type G domain. Residues 415-422 (GHVDHGKT) form a G1 region. 415-422 (GHVDHGKT) lines the GTP pocket. The tract at residues 440–444 (GITQH) is G2. The G3 stretch occupies residues 461 to 464 (DTPG). GTP contacts are provided by residues 461 to 465 (DTPGH) and 515 to 518 (NKID). Positions 515 to 518 (NKID) are G4. The tract at residues 551–553 (SAK) is G5.

Belongs to the TRAFAC class translation factor GTPase superfamily. Classic translation factor GTPase family. IF-2 subfamily.

Its subcellular location is the cytoplasm. In terms of biological role, one of the essential components for the initiation of protein synthesis. Protects formylmethionyl-tRNA from spontaneous hydrolysis and promotes its binding to the 30S ribosomal subunits. Also involved in the hydrolysis of GTP during the formation of the 70S ribosomal complex. In Vibrio vulnificus (strain CMCP6), this protein is Translation initiation factor IF-2.